A 352-amino-acid polypeptide reads, in one-letter code: Ion-translocating oxidoreductase complex subunit D (352 aa).

4 helical membrane-spanning segments follow: residues 20 to 40, 42 to 62, 69 to 91, and 123 to 143; these read IMLL…WFFG, GTLF…AIVL, VASH…SIPP, and PAMI…TSWL. Thr-187 bears the FMN phosphoryl threonine mark. 5 helical membrane passes run 215-235, 242-262, 267-287, 301-321, and 322-342; these read LAGV…VFLL, WHIP…GWLF, LASP…FFIL, LIFG…GGYP, and DGVA…DYYT.

The protein belongs to the NqrB/RnfD family. The complex is composed of six subunits: RsxA, RsxB, RsxC, RsxD, RsxE and RsxG. Requires FMN as cofactor.

The protein resides in the cell inner membrane. Its function is as follows. Part of a membrane-bound complex that couples electron transfer with translocation of ions across the membrane. Required to maintain the reduced state of SoxR. This is Ion-translocating oxidoreductase complex subunit D from Salmonella dublin (strain CT_02021853).